The sequence spans 468 residues: Cysteine--tRNA ligase (468 aa).

Cys36 lines the Zn(2+) pocket. A 'HIGH' region motif is present at residues 38–48; sequence PTVYNRSHIGN. Residues Cys216, His241, and Glu245 each contribute to the Zn(2+) site. Positions 274–278 match the 'KMSKS' region motif; sequence KMSKS. Residue Lys277 participates in ATP binding.

It belongs to the class-I aminoacyl-tRNA synthetase family. In terms of assembly, monomer. Requires Zn(2+) as cofactor.

The protein localises to the cytoplasm. It catalyses the reaction tRNA(Cys) + L-cysteine + ATP = L-cysteinyl-tRNA(Cys) + AMP + diphosphate. The polypeptide is Cysteine--tRNA ligase (Parvibaculum lavamentivorans (strain DS-1 / DSM 13023 / NCIMB 13966)).